We begin with the raw amino-acid sequence, 563 residues long: Src substrate protein p85 (563 aa).

Cortactin repeat units follow at residues 89–125, 126–162, 163–199, 200–236, 237–273, and 274–310; these read ASHGYGGKFGVEQDRMDKSAVGHEYQSKLSKHCSQVD, SVKGFGGKFGVQTDRVDQSAVGFEYQGKTEKHASQKD, YSSGFGGKYGVQADRVDKSAVGFDYQGKTEKHESQKD, YSKGFGGKYGVDKDKVDKSAVGFEYQGKTEKHESQKD, YVKGFGGKFGVQTDRQDKCALGWDHQEKVQLHESQKD, and YKSGFGGKFGVQTERQDPSAVGFDYKEKLAKHESQQD. Residues 311 to 333 form a Cortactin 7; truncated repeat; sequence YSKGFGGKYGVQKDRMDKNAATF. Residues 331–477 form a disordered region; it reads ATFEDIEKPT…EAVSQREAEY (147 aa). Residues 349–410 are a coiled coil; that stretch reads VERVANKTSS…EEQAKAKKQT (62 aa). A compositionally biased stretch (basic and acidic residues) spans 366–405; the sequence is LAKEKEQEDRRKAEAERAQRMAREKQEQEEARRKLEEQAK. In terms of domain architecture, SH3 spans 505-563; sequence ELGITAIALYDYQAAGDDEISFDPDDIITNIEMIDDGWWRGVCKGRYGLFPANYVELRQ.

Post-translationally, acetylated. In normal cells, appears to be phosphorylated on serine and threonine; in cells expressing activated forms of pp60-src, they become heavily phosphorylated on tyrosine in vitro. Tyrosine phosphorylation in transformed cells may contribute to cellular growth regulation and transformation.

The protein resides in the cytoplasm. Its subcellular location is the cytoskeleton. It localises to the cell projection. It is found in the lamellipodium. The protein localises to the ruffle. The protein resides in the dendrite. Its subcellular location is the cell membrane. It localises to the podosome. It is found in the cell junction. The protein localises to the focal adhesion. The protein resides in the membrane. Its subcellular location is the clathrin-coated pit. It localises to the dendritic spine. It is found in the cell cortex. The protein localises to the endoplasmic reticulum. Its function is as follows. Contributes to the organization of the actin cytoskeleton and cell shape. Plays a role in the formation of lamellipodia and in cell migration. Plays a role in the regulation of neuron morphology, axon growth and formation of neuronal growth cones, and may play a role in the regulation of neuronal spine density. Plays a role in focal adhesion assembly and turnover. Plays a role in intracellular protein transport and endocytosis, and in modulating the levels of potassium channels present at the cell membrane. Plays a role in endocytosis via clathrin-coated pits. This is Src substrate protein p85 (CTTN1) from Gallus gallus (Chicken).